We begin with the raw amino-acid sequence, 828 residues long: Leucine--tRNA ligase (828 aa).

The 'HIGH' region motif lies at 36-46; the sequence is PYPSGKIHIGH. Positions 595-599 match the 'KMSKS' region motif; it reads KMSKS. ATP is bound at residue lysine 598.

Belongs to the class-I aminoacyl-tRNA synthetase family.

It is found in the cytoplasm. It catalyses the reaction tRNA(Leu) + L-leucine + ATP = L-leucyl-tRNA(Leu) + AMP + diphosphate. This chain is Leucine--tRNA ligase, found in Rickettsia typhi (strain ATCC VR-144 / Wilmington).